The primary structure comprises 416 residues: Serine--tRNA ligase (416 aa).

Residue 232 to 234 participates in L-serine binding; sequence TAE. Position 263 to 265 (263 to 265) interacts with ATP; the sequence is RKE. Position 286 (E286) interacts with L-serine. Residue 350–353 participates in ATP binding; sequence EISS. S384 is an L-serine binding site.

It belongs to the class-II aminoacyl-tRNA synthetase family. Type-1 seryl-tRNA synthetase subfamily. In terms of assembly, homodimer. The tRNA molecule binds across the dimer.

The protein resides in the cytoplasm. The enzyme catalyses tRNA(Ser) + L-serine + ATP = L-seryl-tRNA(Ser) + AMP + diphosphate + H(+). The catalysed reaction is tRNA(Sec) + L-serine + ATP = L-seryl-tRNA(Sec) + AMP + diphosphate + H(+). Its pathway is aminoacyl-tRNA biosynthesis; selenocysteinyl-tRNA(Sec) biosynthesis; L-seryl-tRNA(Sec) from L-serine and tRNA(Sec): step 1/1. Its function is as follows. Catalyzes the attachment of serine to tRNA(Ser). Is also able to aminoacylate tRNA(Sec) with serine, to form the misacylated tRNA L-seryl-tRNA(Sec), which will be further converted into selenocysteinyl-tRNA(Sec). The chain is Serine--tRNA ligase from Nautilia profundicola (strain ATCC BAA-1463 / DSM 18972 / AmH).